Reading from the N-terminus, the 449-residue chain is Phosphoglucosamine mutase (449 aa).

Catalysis depends on Ser101, which acts as the Phosphoserine intermediate. Positions 101, 242, 244, and 246 each coordinate Mg(2+). Residue Ser101 is modified to Phosphoserine.

Belongs to the phosphohexose mutase family. The cofactor is Mg(2+). Activated by phosphorylation.

The enzyme catalyses alpha-D-glucosamine 1-phosphate = D-glucosamine 6-phosphate. Functionally, catalyzes the conversion of glucosamine-6-phosphate to glucosamine-1-phosphate. This chain is Phosphoglucosamine mutase, found in Methylocella silvestris (strain DSM 15510 / CIP 108128 / LMG 27833 / NCIMB 13906 / BL2).